The following is a 341-amino-acid chain: Ketol-acid reductoisomerase (NADP(+)) (341 aa).

One can recognise a KARI N-terminal Rossmann domain in the interval 2–181 (AKVYYNGDAN…GATRAGVLET (180 aa)). Residues 25–28 (YGSQ), arginine 48, serine 52, and 82–85 (DEKQ) each bind NADP(+). Histidine 107 is an active-site residue. Position 133 (glycine 133) interacts with NADP(+). In terms of domain architecture, KARI C-terminal knotted spans 182-327 (TFKEETETDL…RELRSMMPFV (146 aa)). 4 residues coordinate Mg(2+): aspartate 190, glutamate 194, glutamate 226, and glutamate 230. Serine 251 contributes to the substrate binding site.

This sequence belongs to the ketol-acid reductoisomerase family. Mg(2+) is required as a cofactor.

The catalysed reaction is (2R)-2,3-dihydroxy-3-methylbutanoate + NADP(+) = (2S)-2-acetolactate + NADPH + H(+). The enzyme catalyses (2R,3R)-2,3-dihydroxy-3-methylpentanoate + NADP(+) = (S)-2-ethyl-2-hydroxy-3-oxobutanoate + NADPH + H(+). It functions in the pathway amino-acid biosynthesis; L-isoleucine biosynthesis; L-isoleucine from 2-oxobutanoate: step 2/4. It participates in amino-acid biosynthesis; L-valine biosynthesis; L-valine from pyruvate: step 2/4. In terms of biological role, involved in the biosynthesis of branched-chain amino acids (BCAA). Catalyzes an alkyl-migration followed by a ketol-acid reduction of (S)-2-acetolactate (S2AL) to yield (R)-2,3-dihydroxy-isovalerate. In the isomerase reaction, S2AL is rearranged via a Mg-dependent methyl migration to produce 3-hydroxy-3-methyl-2-ketobutyrate (HMKB). In the reductase reaction, this 2-ketoacid undergoes a metal-dependent reduction by NADPH to yield (R)-2,3-dihydroxy-isovalerate. This chain is Ketol-acid reductoisomerase (NADP(+)), found in Geobacillus sp. (strain WCH70).